Reading from the N-terminus, the 526-residue chain is ATP-dependent RNA helicase dbp8 (526 aa).

The interval Met1 to Gln77 is disordered. Positions Ser17–Arg31 are enriched in polar residues. The Q motif signature appears at Ser96–Lys124. Positions Ile127–Pro306 constitute a Helicase ATP-binding domain. Ser140 to Thr147 provides a ligand contact to ATP. A DEAD box motif is present at residues Asp249–Asp252. Positions Ala338–Glu485 constitute a Helicase C-terminal domain.

Belongs to the DEAD box helicase family. DDX49/DBP8 subfamily.

It localises to the nucleus. The protein resides in the nucleolus. It catalyses the reaction ATP + H2O = ADP + phosphate + H(+). Functionally, ATP-binding RNA helicase involved in 40S ribosomal subunit biogenesis and is required for the normal formation of 18S rRNAs through pre-rRNA processing at A0, A1 and A2 sites. Required for vegetative growth. This is ATP-dependent RNA helicase dbp8 (dbp8) from Aspergillus fumigatus (strain ATCC MYA-4609 / CBS 101355 / FGSC A1100 / Af293) (Neosartorya fumigata).